A 185-amino-acid polypeptide reads, in one-letter code: Transcription factor bHLH109 (185 aa).

One can recognise a bHLH domain in the interval Arg67–Leu117.

The protein belongs to the bHLH protein family. In terms of assembly, homodimer.

It localises to the nucleus. Transcription factor involved in somatic embryogenesis. Acts as a positive regulator of somatic embryo formation. Acts as a positive regulator of ECP63 by targeting its promoter and inducing its expression. The sequence is that of Transcription factor bHLH109 (BHLH109) from Arabidopsis thaliana (Mouse-ear cress).